The sequence spans 713 residues: MNSFMALVLIWMIIACAEADKPLGETGTTGFQICKNALKLPVLEVLPGGGWDNLRNVDMGRVMDLTYTNCKTTEDGQYIIPDEVYTIPQKESNLEMNSEVLESWMNYQSTTSLSINTELALFSRVNGKFSTEFQRMKTLQVKDQAVTTRVQVRNRIYTVKTTPTSELSLGFTKALMDICDQLEKNQTKMATYLAELLILNYGTHVITSVDAGAALVQEDHVRSSFLLDNQNSQNTVTASAGIAFLNIVNFKVETDYISQTSLTKDYLSNRTNSRVQSFGGVPFYPGITLETWQKGITNHLVAIDRAGLPLHFFIKPDKLPGLPGPLVKKLSKTVETAVRHYYTFNTHPGCTNVDSPNFNFQANMDDDSCDAKVTNFTFGGVYQECTELSGDVLCQNLEQKNLLTGDFSCPPGYSPVHLLSQTHEEGYSRLECKKKCTLKIFCKTVCEDVFRVAKAEFRAYWCVAAGQVPDNSGLLFGGVFTDKTINPMTNAQSCPAGYIPLNLFESLKVCVSLDYELGFKFSVPFGGFFSCIMGNPLVNSDTAKDVRAPSLKKCPGGFSQHLAVISDGCQVSYCVKAGIFTGGSLLPVRLPPYTKPPLMSQVATNTVIVTNSETARSWIKDPQTNQWKLGEPLELRRAMTVIHGDSNGMSGGEAAGITLGVTIALGIVITLAIYGTRKYKKKEYQEIEEQESLVGSLATDATVLNGEEDPSPA.

Residues 1-19 form the signal peptide; the sequence is MNSFMALVLIWMIIACAEA. In terms of domain architecture, MACPF spans 30 to 345; the sequence is GFQICKNALK…TAVRHYYTFN (316 aa). A disulfide bridge connects residues Cys-34 and Cys-70. The next 2 beta stranded transmembrane spans lie at 113 to 120 and 127 to 132; these read LSINTELA and GKFSTE. An N-linked (GlcNAc...) asparagine glycan is attached at Asn-185. Beta stranded transmembrane passes span 235–244 and 248–256; these read TVTASAGIAF and VNFKVETDY. Residue Asn-269 is glycosylated (N-linked (GlcNAc...) asparagine). An intrachain disulfide couples Cys-350 to Cys-369. Asn-375 carries an N-linked (GlcNAc...) asparagine glycan. Cystine bridges form between Cys-385–Cys-394, Cys-432–Cys-446, Cys-436–Cys-442, Cys-531–Cys-569, and Cys-554–Cys-574. The P2 stretch occupies residues 410–653; it reads PPGYSPVHLL…GDSNGMSGGE (244 aa). The chain crosses the membrane as a helical span at residues 654 to 674; sequence AAGITLGVTIALGIVITLAIY.

Belongs to the MPEG1 family. Homooligomer; predominantly forms a homooligomeric arc-shaped pore complex instead of complete rings of 16 subunits. Post-translationally, proteolytically processed in two steps to generate the Macrophage-expressed gene 1 protein, processed form: cleaved by trypsin in proximity of the helical transmembrane domain releases the ectodomain into the lysosomal lumen to orient the pore-forming domain toward the endogenous membranes, and processed by the asparagine endopeptidase (LGMN). Proteolytic processing in antigen-containing vesicles is pH-dependent. Monoubiquitinated in response to bacterial infection; ubiquitination is required for vesicular localization and antibacterial activity and can be blocked by bacterial cell cycle inhibiting factor (cif). In terms of tissue distribution, expressed constitutively in a variety of cell types including macrophages, microglia, neutrophils, T cells, marginal zone B cells, keratinocytes, splenocytes and intestinal epithelial cells.

The protein resides in the cytoplasmic vesicle membrane. It is found in the cytoplasmic vesicle. Its subcellular location is the phagosome membrane. Its activity is regulated as follows. Forms arc- and ring-shaped pre-pores on top of the membrane at neutral to slightly acidic pH conditions and converts to pores upon acidification. Undergoes transition from the pre-pore to the pore in a processive clockwise hand-over-hand process. In the pore state, 2 alpha-helical regions refold into transmembrane hairpins (TMH1 and TMH2) in each protomer that form in the ensemble complex giant beta-barrel transmembrane pores. In terms of biological role, pore-forming protein involved in both innate and adaptive immunity. Plays a central role in antigen cross-presentation in dendritic cells by forming a pore in antigen-containing compartments, thereby promoting delivery of antigens for cross-presentation. Also involved in innate immune response following bacterial infection; shows antibacterial activity against a wide spectrum of Gram-positive, Gram-negative and acid-fast bacteria. Reduces the viability of the intracytosolic pathogen L.monocytogenes by inhibiting acidification of the phagocytic vacuole of host cells which restricts bacterial translocation from the vacuole to the cytosol. Required for the antibacterial activity of reactive oxygen species and nitric oxide. Functionally, pore-forming protein that plays a central role in antigen cross-presentation in dendritic cells by mediating delivery of antigens for cross-presentation. Dendritic cells bridge innate and adaptive immunity by capturing exogenous antigens on MHC class-I molecules and presenting them to naive CD8(+) T-cells. Acts by forming a pore in antigen-containing compartments, promoting the release of antigens into the cytosol, enabling generation of MHCI:peptide complexes and T-cell priming. This is Macrophage-expressed gene 1 protein from Mus musculus (Mouse).